A 40-amino-acid chain; its full sequence is Photosystem II reaction center protein J (40 aa).

Residues 8–28 (IPLWIIGTVTGIFGIGLIGIF) traverse the membrane as a helical segment.

This sequence belongs to the PsbJ family. PSII is composed of 1 copy each of membrane proteins PsbA, PsbB, PsbC, PsbD, PsbE, PsbF, PsbH, PsbI, PsbJ, PsbK, PsbL, PsbM, PsbT, PsbX, PsbY, PsbZ, Psb30/Ycf12, at least 3 peripheral proteins of the oxygen-evolving complex and a large number of cofactors. It forms dimeric complexes.

It is found in the plastid membrane. Its function is as follows. One of the components of the core complex of photosystem II (PSII). PSII is a light-driven water:plastoquinone oxidoreductase that uses light energy to abstract electrons from H(2)O, generating O(2) and a proton gradient subsequently used for ATP formation. It consists of a core antenna complex that captures photons, and an electron transfer chain that converts photonic excitation into a charge separation. The polypeptide is Photosystem II reaction center protein J (Cuscuta reflexa (Southern Asian dodder)).